Reading from the N-terminus, the 377-residue chain is All-trans-retinol dehydrogenase [NAD(+)] ADH4 (377 aa).

C47 serves as a coordination point for Zn(2+). Position 48–49 (48–49 (PT)) interacts with NAD(+). Zn(2+)-binding residues include H68, C98, C101, C104, C112, and C179. NAD(+) contacts are provided by residues 204 to 209 (GLGCVG), D228, K233, 297 to 299 (VGA), 320 to 322 (TFF), and R372.

It belongs to the zinc-containing alcohol dehydrogenase family. Class-II subfamily. Dimer. It depends on Zn(2+) as a cofactor. Liver specific.

The protein localises to the cytoplasm. The catalysed reaction is all-trans-retinol + NAD(+) = all-trans-retinal + NADH + H(+). It catalyses the reaction 9-cis-retinol + NAD(+) = 9-cis-retinal + NADH + H(+). It carries out the reaction 20-oxo-(5Z,8Z,11Z,14Z)-eicosatetraenoate + NAD(+) + H2O = (5Z,8Z,11Z,14Z)-eicosatetraenedioate + NADH + 2 H(+). The enzyme catalyses 20-hydroxy-(5Z,8Z,11Z,14Z)-eicosatetraenoate + NAD(+) = 20-oxo-(5Z,8Z,11Z,14Z)-eicosatetraenoate + NADH + H(+). The catalysed reaction is 1,4-benzoquinone + NADH + H(+) = hydroquinone + NAD(+). Its activity is regulated as follows. Oxidation of 20-HETE is inhibited by low concentrations of N-heptylformamide. Oxidation of 20-HETE is a decreased by 55-65% by either all-trans-retinol or all-trans-retinoic acid. Strongly inhibited by omega-hydroxy fatty acids. Catalyzes the NAD-dependent oxidation of either all-trans-retinol or 9-cis-retinol. Also oxidizes long chain omega-hydroxy fatty acids, such as 20-HETE, producing both the intermediate aldehyde, 20-oxoarachidonate and the end product, a dicarboxylic acid, (5Z,8Z,11Z,14Z)-eicosatetraenedioate. Also catalyzes the reduction of benzoquinones. The sequence is that of All-trans-retinol dehydrogenase [NAD(+)] ADH4 from Rattus norvegicus (Rat).